A 688-amino-acid polypeptide reads, in one-letter code: Potassium-transporting ATPase ATP-binding subunit (688 aa).

4 consecutive transmembrane segments (helical) span residues 34–54, 62–82, 219–239, and 260–280; these read PVMFVVYLGSWLTTLIWLAIL, AMFTGSIALWLWFTVLFANMA, VALTILLVALTIVFLLATATL, and VLVALLVCLIPTTIGGLLSAI. The active-site 4-aspartylphosphate intermediate is the D313. Residues D350, E354, 383–390, and K401 each bind ATP; that span reads FSAQTRMS. Mg(2+) is bound by residues D524 and D528. 3 helical membrane passes run 594 to 614, 622 to 642, and 662 to 682; these read FAIIPAAFAATYPQLNALNIM, AILSAVIFNALVIVFLIPLAL, and IYGLGGLLVPFVGIKLIDLLL.

This sequence belongs to the cation transport ATPase (P-type) (TC 3.A.3) family. Type IA subfamily. In terms of assembly, the system is composed of three essential subunits: KdpA, KdpB and KdpC.

The protein localises to the cell inner membrane. The catalysed reaction is K(+)(out) + ATP + H2O = K(+)(in) + ADP + phosphate + H(+). Functionally, part of the high-affinity ATP-driven potassium transport (or Kdp) system, which catalyzes the hydrolysis of ATP coupled with the electrogenic transport of potassium into the cytoplasm. This subunit is responsible for energy coupling to the transport system and for the release of the potassium ions to the cytoplasm. The polypeptide is Potassium-transporting ATPase ATP-binding subunit (Yersinia pseudotuberculosis serotype I (strain IP32953)).